The chain runs to 111 residues: Small ribosomal subunit protein uS10 (111 aa).

Belongs to the universal ribosomal protein uS10 family. Part of the 30S ribosomal subunit.

Involved in the binding of tRNA to the ribosomes. This chain is Small ribosomal subunit protein uS10, found in Protochlamydia amoebophila (strain UWE25).